The primary structure comprises 420 residues: Tol-Pal system protein TolB (420 aa).

The N-terminal stretch at 1 to 21 (MKLFVHLVLFISLFIPYFTKA) is a signal peptide.

This sequence belongs to the TolB family. As to quaternary structure, the Tol-Pal system is composed of five core proteins: the inner membrane proteins TolA, TolQ and TolR, the periplasmic protein TolB and the outer membrane protein Pal. They form a network linking the inner and outer membranes and the peptidoglycan layer.

It localises to the periplasm. Functionally, part of the Tol-Pal system, which plays a role in outer membrane invagination during cell division and is important for maintaining outer membrane integrity. This chain is Tol-Pal system protein TolB, found in Wolbachia pipientis wMel.